Reading from the N-terminus, the 213-residue chain is Isopentenyl-diphosphate Delta-isomerase (213 aa).

A compositionally biased stretch (basic and acidic residues) spans 1–10 (MRDSMSEADR). A disordered region spans residues 1–34 (MRDSMSEADRSSPGSGKTDREDETAENATQDVIA). Mn(2+) contacts are provided by histidine 51, histidine 58, and histidine 95. The Nudix hydrolase domain occupies 56–193 (VRHRAFTCLL…RQLRLCPWFE (138 aa)). Glutamate 113 contributes to the Mg(2+) binding site. Residues glutamate 142 and glutamate 144 each contribute to the Mn(2+) site. Glutamate 144 is a catalytic residue.

It belongs to the IPP isomerase type 1 family. Mg(2+) serves as cofactor. The cofactor is Mn(2+).

The protein resides in the cytoplasm. It catalyses the reaction isopentenyl diphosphate = dimethylallyl diphosphate. Its pathway is isoprenoid biosynthesis; dimethylallyl diphosphate biosynthesis; dimethylallyl diphosphate from isopentenyl diphosphate: step 1/1. Its function is as follows. Catalyzes the 1,3-allylic rearrangement of the homoallylic substrate isopentenyl (IPP) to its highly electrophilic allylic isomer, dimethylallyl diphosphate (DMAPP). The sequence is that of Isopentenyl-diphosphate Delta-isomerase from Halobacterium salinarum (strain ATCC 700922 / JCM 11081 / NRC-1) (Halobacterium halobium).